The chain runs to 384 residues: Deoxyguanosinetriphosphate triphosphohydrolase-like protein (384 aa).

Residues 63–199 enclose the HD domain; the sequence is RLTHSLEVAT…ASLADDISYI (137 aa).

The protein belongs to the dGTPase family. Type 2 subfamily.

The protein is Deoxyguanosinetriphosphate triphosphohydrolase-like protein of Rickettsia typhi (strain ATCC VR-144 / Wilmington).